A 644-amino-acid polypeptide reads, in one-letter code: Macrolide export ATP-binding/permease protein MacB (644 aa).

Residues 1-268 (MNIIEIKQLN…SAIVAHKMRS (268 aa)) are Cytoplasmic-facing. One can recognise an ABC transporter domain in the interval 4-242 (IEIKQLNRYF…VKNPSVFKGR (239 aa)). ATP is bound at residue 40 to 47 (GQSGSGKS). The helical transmembrane segment at 269–289 (LLTMLGIIIGITSVVSVVALG) threads the bilayer. Residues 290 to 523 (NGSQQKILEN…TGTMKLLISS (234 aa)) lie on the Periplasmic side of the membrane. A helical transmembrane segment spans residues 524–544 (IAFISLIVGGIGVMNIMLVSV). At 545 to 573 (TERTKEIGVRMAIGARQINILQQFLIEAV) the chain is on the cytoplasmic side. Residues 574–594 (LICLIGGVAGILLSVLIGVLF) form a helical membrane-spanning segment. Residues 595 to 607 (NSFITDFSMDFST) lie on the Periplasmic side of the membrane. The chain crosses the membrane as a helical span at residues 608-628 (ASIVTAVLFSTLIGVLFGYMP). At 629 to 644 (AKKAAELNPITALAQE) the chain is on the cytoplasmic side.

It belongs to the ABC transporter superfamily. Macrolide exporter (TC 3.A.1.122) family. As to quaternary structure, homodimer. Part of the tripartite efflux system MacAB-TdeA, which is composed of an inner membrane transporter, MacB, a periplasmic membrane fusion protein, MacA, and an outer membrane component, TdeA. The complex forms a large protein conduit and can translocate molecules across both the inner and outer membranes. Interacts with MacA.

The protein localises to the cell inner membrane. Its function is as follows. Part of the tripartite efflux system MacAB-TdeA. MacB is a non-canonical ABC transporter that contains transmembrane domains (TMD), which form a pore in the inner membrane, and an ATP-binding domain (NBD), which is responsible for energy generation. Confers resistance against macrolides. The chain is Macrolide export ATP-binding/permease protein MacB from Aggregatibacter actinomycetemcomitans (Actinobacillus actinomycetemcomitans).